Consider the following 432-residue polypeptide: Acyl-coenzyme A thioesterase 3 (432 aa).

Catalysis depends on charge relay system residues Ser-243, Asp-337, and His-371. A Microbody targeting signal motif is present at residues 430–432 (AKL).

This sequence belongs to the C/M/P thioester hydrolase family. As to expression, widely expressed. Highly expressed in the kidney, expressed at low level in the liver. Isoform 2 is expressed in the kidney, but not in the liver. Isoform 1 is liver-specific. Highly expressed in kidney (at protein level).

The protein resides in the peroxisome. The enzyme catalyses hexadecanoyl-CoA + H2O = hexadecanoate + CoA + H(+). It carries out the reaction decanoyl-CoA + H2O = decanoate + CoA + H(+). The catalysed reaction is dodecanoyl-CoA + H2O = dodecanoate + CoA + H(+). It catalyses the reaction tetradecanoyl-CoA + H2O = tetradecanoate + CoA + H(+). The enzyme catalyses octadecanoyl-CoA + H2O = octadecanoate + CoA + H(+). It carries out the reaction eicosanoyl-CoA + H2O = eicosanoate + CoA + H(+). The catalysed reaction is (9Z)-octadecenoyl-CoA + H2O = (9Z)-octadecenoate + CoA + H(+). It catalyses the reaction (9Z,12Z)-octadecadienoyl-CoA + H2O = (9Z,12Z)-octadecadienoate + CoA + H(+). The enzyme catalyses (5Z,8Z,11Z,14Z)-eicosatetraenoyl-CoA + H2O = (5Z,8Z,11Z,14Z)-eicosatetraenoate + CoA + H(+). It carries out the reaction tetracosanoyl-CoA + H2O = tetracosanoate + CoA + H(+). The catalysed reaction is hexacosanoyl-CoA + H2O = hexacosanoate + CoA + H(+). It catalyses the reaction docosanoyl-CoA + H2O = docosanoate + CoA + H(+). The enzyme catalyses (9Z)-hexadecenoyl-CoA + H2O = (9Z)-hexadecenoate + CoA + H(+). It functions in the pathway lipid metabolism; fatty acid metabolism. Functionally, catalyzes the hydrolysis of acyl-CoAs into free fatty acids and coenzyme A (CoASH), regulating their respective intracellular levels. Mainly active on long-chain acyl-CoAs. May have a function in termination of beta-oxidation of fatty acids. This is Acyl-coenzyme A thioesterase 3 (Acot3) from Mus musculus (Mouse).